The chain runs to 488 residues: 3-octaprenyl-4-hydroxybenzoate carboxy-lyase (488 aa).

N172 lines the Mn(2+) pocket. Residues 175-177, 189-191, and 194-195 contribute to the prenylated FMN site; these read IYR, RWL, and RG. E238 lines the Mn(2+) pocket. D287 (proton donor) is an active-site residue.

Belongs to the UbiD family. As to quaternary structure, homohexamer. It depends on prenylated FMN as a cofactor. Mn(2+) serves as cofactor.

The protein resides in the cell membrane. The catalysed reaction is a 4-hydroxy-3-(all-trans-polyprenyl)benzoate + H(+) = a 2-(all-trans-polyprenyl)phenol + CO2. Its pathway is cofactor biosynthesis; ubiquinone biosynthesis. In terms of biological role, catalyzes the decarboxylation of 3-octaprenyl-4-hydroxy benzoate to 2-octaprenylphenol, an intermediate step in ubiquinone biosynthesis. This is 3-octaprenyl-4-hydroxybenzoate carboxy-lyase from Stutzerimonas stutzeri (strain A1501) (Pseudomonas stutzeri).